Reading from the N-terminus, the 728-residue chain is FYN-binding protein 2 (728 aa).

Disordered stretches follow at residues 17 to 76 (QNLD…PLQP), 250 to 287 (QAPE…RPPI), and 367 to 390 (PGKN…EKQP). Residues 42 to 75 (GTQSTQILANGKPLSSNHKQRTPYCSSSESQPLQ) are compositionally biased toward polar residues. A compositionally biased stretch (pro residues) spans 276–285 (GPPPPKPSRP). The span at 377 to 390 (SAKHEDKKMKEKQP) shows a compositional bias: basic and acidic residues. Residue Tyr-491 is modified to Phosphotyrosine. The short motif at 521 to 524 (YEDV) is the SH2-binding; to LCP2 element. Tyr-587 bears the Phosphotyrosine mark. The SH3 domain maps to 664-724 (IVINTAVACS…LIEHLDFKHQ (61 aa)).

In terms of assembly, interacts with SKAP1, LCK and FYN. The phosphorylated form interacts with LCP2. Post-translationally, phosphorylation is required for its function in T-cell activation. In terms of tissue distribution, expressed in T-cells (at protein level). Widely expressed.

The protein resides in the membrane raft. Functionally, adapter protein that plays a role in T-cell receptor (TCR)-mediated activation of signaling pathways. Required for T-cell activation and integrin-mediated T-cell adhesion in response to TCR stimulation. The sequence is that of FYN-binding protein 2 from Homo sapiens (Human).